We begin with the raw amino-acid sequence, 153 residues long: Ribosome maturation factor RimP (153 aa).

It belongs to the RimP family.

The protein resides in the cytoplasm. Required for maturation of 30S ribosomal subunits. This is Ribosome maturation factor RimP from Coxiella burnetii (strain Dugway 5J108-111).